A 48-amino-acid polypeptide reads, in one-letter code: Large ribosomal subunit protein bL32c (48 aa).

The protein belongs to the bacterial ribosomal protein bL32 family.

It localises to the plastid. Its subcellular location is the chloroplast. This Vicia faba (Broad bean) protein is Large ribosomal subunit protein bL32c (rpl32).